An 86-amino-acid chain; its full sequence is Acyl carrier protein (86 aa).

The Carrier domain maps to 5–80; the sequence is EEILKKVQSI…EAVEFIIDKI (76 aa). Ser-40 is modified (O-(pantetheine 4'-phosphoryl)serine).

The protein belongs to the acyl carrier protein (ACP) family. 4'-phosphopantetheine is transferred from CoA to a specific serine of apo-ACP by AcpS. This modification is essential for activity because fatty acids are bound in thioester linkage to the sulfhydryl of the prosthetic group.

The protein localises to the plastid. The protein resides in the chloroplast. The protein operates within lipid metabolism; fatty acid biosynthesis. In terms of biological role, carrier of the growing fatty acid chain in fatty acid biosynthesis. The protein is Acyl carrier protein of Cyanidium caldarium (Red alga).